Consider the following 200-residue polypeptide: Imidazoleglycerol-phosphate dehydratase (200 aa).

It belongs to the imidazoleglycerol-phosphate dehydratase family.

The protein resides in the cytoplasm. It catalyses the reaction D-erythro-1-(imidazol-4-yl)glycerol 3-phosphate = 3-(imidazol-4-yl)-2-oxopropyl phosphate + H2O. It functions in the pathway amino-acid biosynthesis; L-histidine biosynthesis; L-histidine from 5-phospho-alpha-D-ribose 1-diphosphate: step 6/9. This Chlorobium limicola (strain DSM 245 / NBRC 103803 / 6330) protein is Imidazoleglycerol-phosphate dehydratase.